A 156-amino-acid polypeptide reads, in one-letter code: ATP synthase subunit b (156 aa).

Residues 7 to 27 (LFAQIIVFFGLVWFTMKFVWP) traverse the membrane as a helical segment.

It belongs to the ATPase B chain family. F-type ATPases have 2 components, F(1) - the catalytic core - and F(0) - the membrane proton channel. F(1) has five subunits: alpha(3), beta(3), gamma(1), delta(1), epsilon(1). F(0) has three main subunits: a(1), b(2) and c(10-14). The alpha and beta chains form an alternating ring which encloses part of the gamma chain. F(1) is attached to F(0) by a central stalk formed by the gamma and epsilon chains, while a peripheral stalk is formed by the delta and b chains.

The protein localises to the cell inner membrane. In terms of biological role, f(1)F(0) ATP synthase produces ATP from ADP in the presence of a proton or sodium gradient. F-type ATPases consist of two structural domains, F(1) containing the extramembraneous catalytic core and F(0) containing the membrane proton channel, linked together by a central stalk and a peripheral stalk. During catalysis, ATP synthesis in the catalytic domain of F(1) is coupled via a rotary mechanism of the central stalk subunits to proton translocation. Functionally, component of the F(0) channel, it forms part of the peripheral stalk, linking F(1) to F(0). The chain is ATP synthase subunit b from Neisseria gonorrhoeae (strain NCCP11945).